Consider the following 376-residue polypeptide: Metal tolerance protein 6 (376 aa).

Positions 1-28 (MAAAAGVAAGTGRGSGEGEELLPNAVEG) are disordered. Over 1 to 123 (MAAAAGVAAG…CEKVARSEAL (123 aa)) the chain is Cytoplasmic. Residues 124–144 (AIRLSNIANMVLFAAKVYASI) form a helical membrane-spanning segment. Residues 145 to 149 (RSGSL) are Vacuolar-facing. A helical transmembrane segment spans residues 150-170 (AIIASTLDSLLDLLSGFILWF). Over 171–191 (TAFSKKTSNPYRYPIGKRRMQ) the chain is Cytoplasmic. Residues 192–212 (PLGILVFASVMATLGLQIILE) traverse the membrane as a helical segment. The Vacuolar segment spans residues 213 to 231 (STRSLFYDGDTFRLTKEQE). Residues 232 to 252 (KWVVDIMLSVTSVKLLLVVYC) traverse the membrane as a helical segment. Residues 253-376 (RSFTNEILAI…PEHARSHDTL (124 aa)) lie on the Cytoplasmic side of the membrane.

The protein belongs to the cation diffusion facilitator (CDF) transporter (TC 2.A.4) family. SLC30A subfamily.

The protein resides in the vacuole membrane. Functionally, involved in sequestration of excess metal in the cytoplasm into vacuoles to maintain metal homeostasis. The polypeptide is Metal tolerance protein 6 (MTP6) (Oryza sativa subsp. japonica (Rice)).